We begin with the raw amino-acid sequence, 847 residues long: Protein IRS1 (847 aa).

Disordered stretches follow at residues 1–82 (MAQR…NFWH), 607–627 (WLME…ATMP), and 715–847 (QVIP…HVHH). A compositionally biased stretch (gly residues) spans 16 to 25 (RGRGAGGPSG). The span at 26–56 (VGSSPPSSCVPMGATSTAGTGASAAPTATPG) shows a compositional bias: low complexity. Acidic residues predominate over residues 723–733 (EPEDDDEDPTY). Over residues 833-847 (RPKKCQTHAPHHVHH) the composition is skewed to basic residues.

This sequence belongs to the herpesviridae US22 family. As to quaternary structure, interacts (via N-terminus) with the viral DNA polymerase accessory subunit UL44. Interacts (via C-terminus) with host EIF2AK2.

It localises to the virion. The protein resides in the host cytoplasm. Its subcellular location is the host nucleus. Functionally, acts as a transactivator along with IE2, and is required for oriLyt-dependent DNA replication in the transient transfection replication assay using native promoters. In Human cytomegalovirus (strain Merlin) (HHV-5), this protein is Protein IRS1 (IRS1).